Consider the following 509-residue polypeptide: Protein MAIN-LIKE 1 (509 aa).

A disordered region spans residues 477–509 (GYGKRRRRNEHTPTPNNGGGNDISSLLLQKEDS). Residues 488 to 503 (TPTPNNGGGNDISSLL) are compositionally biased toward polar residues.

Expressed in root tips, the shoot apical meristem (SAM), leaves, mature flowers and embryos.

Its subcellular location is the nucleus. Functionally, acts as an important factor for cell fate determination and maintenance throughout plant development. Required for the organization of the root apical meristem (RAM) and the shoot apical meristem (SAM). Required to maintain genome stability and cell division activity in meristematic cells. The protein is Protein MAIN-LIKE 1 of Arabidopsis thaliana (Mouse-ear cress).